An 80-amino-acid chain; its full sequence is Defensin-like protein 17 (80 aa).

The first 29 residues, 1–29 (MAKSATIITFLFAALVLFAAFEAPTMVEA), serve as a signal peptide directing secretion. Q30 carries the pyrrolidone carboxylic acid modification. 4 cysteine pairs are disulfide-bonded: C33–C80, C44–C65, C50–C74, and C54–C76.

Belongs to the DEFL family.

It localises to the secreted. Functionally, confers broad-spectrum resistance to pathogens. The protein is Defensin-like protein 17 (PDF1.2C) of Arabidopsis thaliana (Mouse-ear cress).